We begin with the raw amino-acid sequence, 23 residues long: Coenzyme PQQ synthesis protein A (23 aa).

Residues 15-19 (EVTMY) constitute a cross-link (pyrroloquinoline quinone (Glu-Tyr)).

It belongs to the PqqA family.

It functions in the pathway cofactor biosynthesis; pyrroloquinoline quinone biosynthesis. In terms of biological role, required for coenzyme pyrroloquinoline quinone (PQQ) biosynthesis. PQQ is probably formed by cross-linking a specific glutamate to a specific tyrosine residue and excising these residues from the peptide. The polypeptide is Coenzyme PQQ synthesis protein A (Pseudomonas putida (strain W619)).